The primary structure comprises 184 residues: ATP synthase subunit b, chloroplastic (184 aa).

The chain crosses the membrane as a helical span at residues 29 to 49 (INIINLGIVIGLLVYLGEGVL).

It belongs to the ATPase B chain family. F-type ATPases have 2 components, F(1) - the catalytic core - and F(0) - the membrane proton channel. F(1) has five subunits: alpha(3), beta(3), gamma(1), delta(1), epsilon(1). F(0) has four main subunits: a(1), b(1), b'(1) and c(10-14). The alpha and beta chains form an alternating ring which encloses part of the gamma chain. F(1) is attached to F(0) by a central stalk formed by the gamma and epsilon chains, while a peripheral stalk is formed by the delta, b and b' chains.

It localises to the plastid. The protein resides in the chloroplast thylakoid membrane. Functionally, f(1)F(0) ATP synthase produces ATP from ADP in the presence of a proton or sodium gradient. F-type ATPases consist of two structural domains, F(1) containing the extramembraneous catalytic core and F(0) containing the membrane proton channel, linked together by a central stalk and a peripheral stalk. During catalysis, ATP synthesis in the catalytic domain of F(1) is coupled via a rotary mechanism of the central stalk subunits to proton translocation. Component of the F(0) channel, it forms part of the peripheral stalk, linking F(1) to F(0). This is ATP synthase subunit b, chloroplastic from Psilotum nudum (Whisk fern).